Reading from the N-terminus, the 87-residue chain is CRISPR-associated endoribonuclease Cas2 (87 aa).

D8 is a binding site for Mg(2+).

It belongs to the CRISPR-associated endoribonuclease Cas2 protein family. Homodimer, forms a heterotetramer with a Cas1 homodimer. Mg(2+) serves as cofactor.

In terms of biological role, CRISPR (clustered regularly interspaced short palindromic repeat), is an adaptive immune system that provides protection against mobile genetic elements (viruses, transposable elements and conjugative plasmids). CRISPR clusters contain sequences complementary to antecedent mobile elements and target invading nucleic acids. CRISPR clusters are transcribed and processed into CRISPR RNA (crRNA). Functions as a ssRNA-specific endoribonuclease. Involved in the integration of spacer DNA into the CRISPR cassette. The protein is CRISPR-associated endoribonuclease Cas2 of Methanosarcina acetivorans (strain ATCC 35395 / DSM 2834 / JCM 12185 / C2A).